Reading from the N-terminus, the 226-residue chain is Enolase-phosphatase E1 (226 aa).

It belongs to the HAD-like hydrolase superfamily. MasA/MtnC family. As to quaternary structure, monomer. It depends on Mg(2+) as a cofactor.

The enzyme catalyses 5-methylsulfanyl-2,3-dioxopentyl phosphate + H2O = 1,2-dihydroxy-5-(methylsulfanyl)pent-1-en-3-one + phosphate. It participates in amino-acid biosynthesis; L-methionine biosynthesis via salvage pathway; L-methionine from S-methyl-5-thio-alpha-D-ribose 1-phosphate: step 3/6. It functions in the pathway amino-acid biosynthesis; L-methionine biosynthesis via salvage pathway; L-methionine from S-methyl-5-thio-alpha-D-ribose 1-phosphate: step 4/6. Bifunctional enzyme that catalyzes the enolization of 2,3-diketo-5-methylthiopentyl-1-phosphate (DK-MTP-1-P) into the intermediate 2-hydroxy-3-keto-5-methylthiopentenyl-1-phosphate (HK-MTPenyl-1-P), which is then dephosphorylated to form the acireductone 1,2-dihydroxy-3-keto-5-methylthiopentene (DHK-MTPene). This chain is Enolase-phosphatase E1, found in Shewanella baltica (strain OS195).